We begin with the raw amino-acid sequence, 251 residues long: Triosephosphate isomerase (251 aa).

Substrate is bound at residue 8–10 (NWK). Residue H97 is the Electrophile of the active site. E170 (proton acceptor) is an active-site residue. Residues G176, S215, and 236–237 (GG) contribute to the substrate site.

It belongs to the triosephosphate isomerase family. As to quaternary structure, homodimer.

The protein localises to the cytoplasm. The enzyme catalyses D-glyceraldehyde 3-phosphate = dihydroxyacetone phosphate. It functions in the pathway carbohydrate biosynthesis; gluconeogenesis. It participates in carbohydrate degradation; glycolysis; D-glyceraldehyde 3-phosphate from glycerone phosphate: step 1/1. In terms of biological role, involved in the gluconeogenesis. Catalyzes stereospecifically the conversion of dihydroxyacetone phosphate (DHAP) to D-glyceraldehyde-3-phosphate (G3P). In Nitratidesulfovibrio vulgaris (strain ATCC 29579 / DSM 644 / CCUG 34227 / NCIMB 8303 / VKM B-1760 / Hildenborough) (Desulfovibrio vulgaris), this protein is Triosephosphate isomerase.